Reading from the N-terminus, the 435-residue chain is Islet cell autoantigen 1-like protein (435 aa).

The AH domain occupies A44–E247. A disordered region spans residues W391–A435. Residues G426 to A435 show a composition bias toward basic and acidic residues.

This Rattus norvegicus (Rat) protein is Islet cell autoantigen 1-like protein (Ica1l).